Here is a 164-residue protein sequence, read N- to C-terminus: Putative 4-hydroxy-4-methyl-2-oxoglutarate aldolase (164 aa).

Residues 80-83 and Arg-102 contribute to the substrate site; that span reads GGNL. Asp-103 provides a ligand contact to a divalent metal cation.

Belongs to the class II aldolase/RraA-like family. Homotrimer. Requires a divalent metal cation as cofactor.

The enzyme catalyses 4-hydroxy-4-methyl-2-oxoglutarate = 2 pyruvate. The catalysed reaction is oxaloacetate + H(+) = pyruvate + CO2. In terms of biological role, catalyzes the aldol cleavage of 4-hydroxy-4-methyl-2-oxoglutarate (HMG) into 2 molecules of pyruvate. Also contains a secondary oxaloacetate (OAA) decarboxylase activity due to the common pyruvate enolate transition state formed following C-C bond cleavage in the retro-aldol and decarboxylation reactions. In Burkholderia multivorans (strain ATCC 17616 / 249), this protein is Putative 4-hydroxy-4-methyl-2-oxoglutarate aldolase.